A 129-amino-acid chain; its full sequence is Large ribosomal subunit protein uL22 (129 aa).

It belongs to the universal ribosomal protein uL22 family. As to quaternary structure, part of the 50S ribosomal subunit.

Functionally, this protein binds specifically to 23S rRNA; its binding is stimulated by other ribosomal proteins, e.g. L4, L17, and L20. It is important during the early stages of 50S assembly. It makes multiple contacts with different domains of the 23S rRNA in the assembled 50S subunit and ribosome. In terms of biological role, the globular domain of the protein is located near the polypeptide exit tunnel on the outside of the subunit, while an extended beta-hairpin is found that lines the wall of the exit tunnel in the center of the 70S ribosome. The chain is Large ribosomal subunit protein uL22 from Onion yellows phytoplasma (strain OY-M).